Consider the following 481-residue polypeptide: Protein nucleotidyltransferase YdiU (481 aa).

ATP contacts are provided by Gly-85, Gly-87, Arg-88, Lys-108, Asp-120, Gly-121, Arg-172, and Arg-179. Asp-248 serves as the catalytic Proton acceptor. The Mg(2+) site is built by Asn-249 and Asp-258. Asp-258 is an ATP binding site.

It belongs to the SELO family. The cofactor is Mg(2+). Mn(2+) is required as a cofactor.

The enzyme catalyses L-seryl-[protein] + ATP = 3-O-(5'-adenylyl)-L-seryl-[protein] + diphosphate. It carries out the reaction L-threonyl-[protein] + ATP = 3-O-(5'-adenylyl)-L-threonyl-[protein] + diphosphate. The catalysed reaction is L-tyrosyl-[protein] + ATP = O-(5'-adenylyl)-L-tyrosyl-[protein] + diphosphate. It catalyses the reaction L-histidyl-[protein] + UTP = N(tele)-(5'-uridylyl)-L-histidyl-[protein] + diphosphate. The enzyme catalyses L-seryl-[protein] + UTP = O-(5'-uridylyl)-L-seryl-[protein] + diphosphate. It carries out the reaction L-tyrosyl-[protein] + UTP = O-(5'-uridylyl)-L-tyrosyl-[protein] + diphosphate. In terms of biological role, nucleotidyltransferase involved in the post-translational modification of proteins. It can catalyze the addition of adenosine monophosphate (AMP) or uridine monophosphate (UMP) to a protein, resulting in modifications known as AMPylation and UMPylation. The chain is Protein nucleotidyltransferase YdiU from Cereibacter sphaeroides (strain ATCC 17025 / ATH 2.4.3) (Rhodobacter sphaeroides).